A 1073-amino-acid polypeptide reads, in one-letter code: Ubiquitin carboxyl-terminal hydrolase 53 (1073 aa).

The 322-residue stretch at 30–351 folds into the USP domain; sequence KGLLNEPGQN…QPLLLFYANP (322 aa). Catalysis depends on Cys-41, which acts as the Nucleophile. Residues His-66, Cys-68, Cys-73, Cys-76, His-132, Cys-144, Cys-149, His-152, Cys-165, Cys-168, Cys-224, and Cys-228 each contribute to the Zn(2+) site. The active-site Proton acceptor is the His-301. 2 disordered regions span residues 391–437 and 485–636; these read LKEN…HIDQ and LSHF…PKQK. The segment covering 407–418 has biased composition (polar residues); it reads KFPTDNISSSNR. The span at 524 to 541 shows a compositional bias: low complexity; it reads QSRASAQIISSSKSQILA. The span at 553-563 shows a compositional bias: polar residues; it reads DNGTGYDTDSS. The span at 612–627 shows a compositional bias: low complexity; that stretch reads NISNKPKSSKDPSFSN.

Belongs to the peptidase C19 family. As to quaternary structure, interacts (via the C-terminal region) with the heterodimer TJP1:TJP2. In terms of tissue distribution, expressed predominantly in skeletal muscle and heart.

Its subcellular location is the cell junction. It is found in the tight junction. It catalyses the reaction Thiol-dependent hydrolysis of ester, thioester, amide, peptide and isopeptide bonds formed by the C-terminal Gly of ubiquitin (a 76-residue protein attached to proteins as an intracellular targeting signal).. Functionally, deubiquitinase that mediates 'Lys-63'-linked deubiquitination of tight junction proteins, such as MARVELD2 and LSR, and which is involved in the survival of auditory hair cells and hearing. Specifically cleaves 'Lys-63'-linked polyubiquitin chains composed of at least 3 ubiquitin molecules, while it is not able to deubiquitinate substrates with shorter ubiquitin chains: recognizes ubiquitin chain in position S2 and catalyzes en bloc cleavage of polyubiquitin chains from substrate proteins. Probably acts by modulating the barrier properties and mechanical stability of tight junctions via deubiquitination of MARVELD2 and LSR. The protein is Ubiquitin carboxyl-terminal hydrolase 53 of Homo sapiens (Human).